A 189-amino-acid chain; its full sequence is GTP cyclohydrolase 1 (189 aa).

3 residues coordinate Zn(2+): C78, H81, and C150.

Belongs to the GTP cyclohydrolase I family. As to quaternary structure, homomer.

The catalysed reaction is GTP + H2O = 7,8-dihydroneopterin 3'-triphosphate + formate + H(+). The protein operates within cofactor biosynthesis; 7,8-dihydroneopterin triphosphate biosynthesis; 7,8-dihydroneopterin triphosphate from GTP: step 1/1. In Lysinibacillus sphaericus (strain C3-41), this protein is GTP cyclohydrolase 1.